The primary structure comprises 118 residues: Small ribosomal subunit protein uS13 (118 aa).

The segment at Arg92–Lys118 is disordered.

Belongs to the universal ribosomal protein uS13 family. Part of the 30S ribosomal subunit. Forms a loose heterodimer with protein S19. Forms two bridges to the 50S subunit in the 70S ribosome.

Functionally, located at the top of the head of the 30S subunit, it contacts several helices of the 16S rRNA. In the 70S ribosome it contacts the 23S rRNA (bridge B1a) and protein L5 of the 50S subunit (bridge B1b), connecting the 2 subunits; these bridges are implicated in subunit movement. Contacts the tRNAs in the A and P-sites. The sequence is that of Small ribosomal subunit protein uS13 from Pectobacterium carotovorum subsp. carotovorum (strain PC1).